The chain runs to 389 residues: Succinate--CoA ligase [ADP-forming] subunit beta (389 aa).

Residues 9–236 (RDLFEKHGVP…KTTADPLEEK (228 aa)) form the ATP-grasp domain. ATP-binding positions include lysine 45, 52–54 (GRG), alanine 94, and glutamate 99. Mg(2+) contacts are provided by asparagine 191 and aspartate 205. Residues asparagine 256 and 318 to 320 (GIT) contribute to the substrate site.

It belongs to the succinate/malate CoA ligase beta subunit family. In terms of assembly, heterotetramer of two alpha and two beta subunits. Mg(2+) serves as cofactor.

It carries out the reaction succinate + ATP + CoA = succinyl-CoA + ADP + phosphate. It catalyses the reaction GTP + succinate + CoA = succinyl-CoA + GDP + phosphate. The protein operates within carbohydrate metabolism; tricarboxylic acid cycle; succinate from succinyl-CoA (ligase route): step 1/1. Its function is as follows. Succinyl-CoA synthetase functions in the citric acid cycle (TCA), coupling the hydrolysis of succinyl-CoA to the synthesis of either ATP or GTP and thus represents the only step of substrate-level phosphorylation in the TCA. The beta subunit provides nucleotide specificity of the enzyme and binds the substrate succinate, while the binding sites for coenzyme A and phosphate are found in the alpha subunit. In Kocuria rhizophila (strain ATCC 9341 / DSM 348 / NBRC 103217 / DC2201), this protein is Succinate--CoA ligase [ADP-forming] subunit beta.